A 109-amino-acid chain; its full sequence is Small ribosomal subunit protein uS17 (109 aa).

The protein belongs to the universal ribosomal protein uS17 family. As to quaternary structure, part of the 30S ribosomal subunit.

Its function is as follows. One of the primary rRNA binding proteins, it binds specifically to the 5'-end of 16S ribosomal RNA. The protein is Small ribosomal subunit protein uS17 of Methanococcus vannielii.